The following is a 508-amino-acid chain: Photosystem II CP47 reaction center protein (508 aa).

The next 6 helical transmembrane spans lie at 21-36, 101-115, 140-156, 203-218, 237-252, and 457-472; these read SVHI…WAGS, IVFS…IWHW, GIHL…FGAF, IAAG…FHLS, VLSS…AFVV, and SFAL…HGAR.

Belongs to the PsbB/PsbC family. PsbB subfamily. As to quaternary structure, PSII is composed of 1 copy each of membrane proteins PsbA, PsbB, PsbC, PsbD, PsbE, PsbF, PsbH, PsbI, PsbJ, PsbK, PsbL, PsbM, PsbT, PsbX, PsbY, PsbZ, Psb30/Ycf12, at least 3 peripheral proteins of the oxygen-evolving complex and a large number of cofactors. It forms dimeric complexes. Binds multiple chlorophylls. PSII binds additional chlorophylls, carotenoids and specific lipids. serves as cofactor.

The protein localises to the plastid. The protein resides in the chloroplast thylakoid membrane. One of the components of the core complex of photosystem II (PSII). It binds chlorophyll and helps catalyze the primary light-induced photochemical processes of PSII. PSII is a light-driven water:plastoquinone oxidoreductase, using light energy to abstract electrons from H(2)O, generating O(2) and a proton gradient subsequently used for ATP formation. The protein is Photosystem II CP47 reaction center protein of Vitis vinifera (Grape).